The primary structure comprises 233 residues: ATP synthase subunit a, chloroplastic (233 aa).

Helical transmembrane passes span V82–I102, I121–S141, L177–V199, and S211–E231.

Belongs to the ATPase A chain family. As to quaternary structure, F-type ATPases have 2 components, CF(1) - the catalytic core - and CF(0) - the membrane proton channel. CF(1) has five subunits: alpha(3), beta(3), gamma(1), delta(1), epsilon(1). CF(0) has four main subunits: a, b, b' and c.

The protein resides in the plastid. It localises to the chloroplast thylakoid membrane. Key component of the proton channel; it plays a direct role in the translocation of protons across the membrane. This chain is ATP synthase subunit a, chloroplastic, found in Galdieria sulphuraria (Red alga).